Here is a 187-residue protein sequence, read N- to C-terminus: ATP synthase subunit delta (187 aa).

This sequence belongs to the ATPase delta chain family. As to quaternary structure, F-type ATPases have 2 components, F(1) - the catalytic core - and F(0) - the membrane proton channel. F(1) has five subunits: alpha(3), beta(3), gamma(1), delta(1), epsilon(1). F(0) has three main subunits: a(1), b(2) and c(10-14). The alpha and beta chains form an alternating ring which encloses part of the gamma chain. F(1) is attached to F(0) by a central stalk formed by the gamma and epsilon chains, while a peripheral stalk is formed by the delta and b chains.

Its subcellular location is the cell membrane. Functionally, f(1)F(0) ATP synthase produces ATP from ADP in the presence of a proton or sodium gradient. F-type ATPases consist of two structural domains, F(1) containing the extramembraneous catalytic core and F(0) containing the membrane proton channel, linked together by a central stalk and a peripheral stalk. During catalysis, ATP synthesis in the catalytic domain of F(1) is coupled via a rotary mechanism of the central stalk subunits to proton translocation. Its function is as follows. This protein is part of the stalk that links CF(0) to CF(1). It either transmits conformational changes from CF(0) to CF(1) or is implicated in proton conduction. The polypeptide is ATP synthase subunit delta (Mesomycoplasma hyopneumoniae (strain 7448) (Mycoplasma hyopneumoniae)).